A 279-amino-acid chain; its full sequence is Non-structural maintenance of chromosomes element 3 homolog (279 aa).

The disordered stretch occupies residues 1–52; the sequence is MLQKPRGRGRPSTQADPERDWGGAGEEGPSTSRAAGGSSQGSRASLSAPTVG. Residues 30–48 are compositionally biased toward low complexity; it reads STSRAAGGSSQGSRASLSA. S38 is subject to Phosphoserine. Residues 52–279 are interaction with NSMCE1; sequence GPRTQKQLEL…ATASAPATSS (228 aa). The 201-residue stretch at 59 to 259 folds into the MAGE domain; it reads LELKVAELVQ…KDWPTQYCEA (201 aa).

As to quaternary structure, component of the SMC5-SMC6 complex which consists at least of SMC5, SMC6, NSMCE2, NSMCE1, NSMCE4A or EID3 and NSMCE3. NSMCE1, NSMCE4A or EID3 and NSMCE3 probably form a subcomplex that bridges the head domains of the SMC5:SMC6 heterodimer. Interacts with PJA1. Interacts with E2F1 (via C-terminus). Interacts with NGFR (via C-terminus). Interacts with NSMCE1. Interacts with NSMCE4. Interacts with SMC6. Interacts with EID3. In terms of tissue distribution, ubiquitous.

It localises to the cytoplasm. The protein resides in the nucleus. It is found in the chromosome. The protein localises to the telomere. Functionally, component of the SMC5-SMC6 complex, a complex involved in repair of DNA double-strand breaks by homologous recombination. The complex may promote sister chromatid homologous recombination by recruiting the SMC1-SMC3 cohesin complex to double-strand breaks. The complex is required for telomere maintenance via recombination in ALT (alternative lengthening of telomeres) cell lines and mediates sumoylation of shelterin complex (telosome) components which is proposed to lead to shelterin complex disassembly in ALT-associated PML bodies (APBs). In vitro enhances ubiquitin ligase activity of NSMCE1. Proposed to act through recruitment and/or stabilization of the Ubl-conjugating enzyme (E2) at the E3:substrate complex. May be a growth suppressor that facilitates the entry of the cell into cell cycle arrest. The chain is Non-structural maintenance of chromosomes element 3 homolog (Nsmce3) from Mus musculus (Mouse).